The chain runs to 314 residues: uncharacterized protein (314 aa).

This sequence to M.leprae ML0607.

This is an uncharacterized protein from Mycobacterium bovis (strain ATCC BAA-935 / AF2122/97).